We begin with the raw amino-acid sequence, 209 residues long: Octanoyltransferase (209 aa).

A BPL/LPL catalytic domain is found at glycine 30–lysine 209. Substrate-binding positions include arginine 69 to histidine 76, alanine 143 to glycine 145, and glycine 156 to alanine 158. Cysteine 174 (acyl-thioester intermediate) is an active-site residue.

The protein belongs to the LipB family.

Its subcellular location is the cytoplasm. It carries out the reaction octanoyl-[ACP] + L-lysyl-[protein] = N(6)-octanoyl-L-lysyl-[protein] + holo-[ACP] + H(+). It participates in protein modification; protein lipoylation via endogenous pathway; protein N(6)-(lipoyl)lysine from octanoyl-[acyl-carrier-protein]: step 1/2. In terms of biological role, catalyzes the transfer of endogenously produced octanoic acid from octanoyl-acyl-carrier-protein onto the lipoyl domains of lipoate-dependent enzymes. Lipoyl-ACP can also act as a substrate although octanoyl-ACP is likely to be the physiological substrate. The protein is Octanoyltransferase of Rickettsia bellii (strain OSU 85-389).